A 205-amino-acid polypeptide reads, in one-letter code: Small ribosomal subunit protein uS4 (205 aa).

The S4 RNA-binding domain maps to 94 to 157; the sequence is SRLDAVVYRA…RNLALVLEAL (64 aa).

This sequence belongs to the universal ribosomal protein uS4 family. As to quaternary structure, part of the 30S ribosomal subunit. Contacts protein S5. The interaction surface between S4 and S5 is involved in control of translational fidelity.

Functionally, one of the primary rRNA binding proteins, it binds directly to 16S rRNA where it nucleates assembly of the body of the 30S subunit. In terms of biological role, with S5 and S12 plays an important role in translational accuracy. In Hyphomonas neptunium (strain ATCC 15444), this protein is Small ribosomal subunit protein uS4.